Consider the following 632-residue polypeptide: MSASTSTSTAASQDACYISLLGLAEYFRTSQPPNIKKCIQCLQALFTFMPPSKVEARTHLQMGQILMAYTKNIDLARQHLEKAWSISEPLPNFDVKFDTASLLAQLHLQTDRNSHQAKAMLRRAVELSQNNVYWHCKLLLQLSQIHASDREYSLASELLAVGAESADEASATYLKVLFLLSRAMILMIERKTNDVLALLNSAGQIIDNNIPNPHQKEYLKVFFLVLQVCYYLALGQVKTVKPSLKQLQMSIQTIMAPNWPSDEAIFGANQLEMFVWLPKEQLYVLVYLVTVSHSMMAGYMDKAQKYTEKALTQIEKLKQQEDKPILSVFKVILLEHIVMCRMVMGNRELAIREIAAARDVCMAAPQRSLLRRHSAQLHCLIGLYSMSTNLFEHAERQFVVCVSETSERDLKLFANLNLAIIYLRTKRDTDLKQILDAVSTENTHTYSSQALMGGFYYVQGLHAFHKNSFHEAKRFLRETLKMANAEDLNRLTSCSLVLLSHVFLSIGNSKESMNMVTPAMQLASKIPDIHVQLWGSAILKDLHRMSKDVQHEKDAYANHVKYSENLIADQRKCVQSAHHELVNWFQGDPPVTSGPPAVPVLLMPESSVTASVPVIASTSAAMQPAGQYGQFY.

2 TPR repeats span residues 453–486 and 493–526; these read GGFYYVQGLHAFHKNSFHEAKRFLRETLKMANAE and SCSLVLLSHVFLSIGNSKESMNMVTPAMQLASKI.

It belongs to the SCC4/mau-2 family. In terms of assembly, interacts with Nipped-B to form the cohesin loading complex.

The protein resides in the nucleus. It localises to the nucleoplasm. Functionally, required for association of the cohesin complex with chromatin during interphase. Plays a role in sister chromatid cohesion and normal progression through prometaphase. This is MAU2 chromatid cohesion factor homolog from Drosophila sechellia (Fruit fly).